Consider the following 722-residue polypeptide: PAB1-binding protein 1 (722 aa).

The segment covering M1 to S10 has biased composition (basic and acidic residues). Positions M1–F38 are disordered. The segment covering S11–F38 has biased composition (polar residues). The Sm domain maps to R51 to V107. S106 carries the phosphoserine modification. T193 carries the phosphothreonine modification. A Phosphoserine modification is found at S215. Disordered regions lie at residues A305 to K380, S412 to T488, and G683 to K722. 4 stretches are compositionally biased toward low complexity: residues K307 to K316, S338 to N347, P356 to T370, and S412 to L421. K344 participates in a covalent cross-link: Glycyl lysine isopeptide (Lys-Gly) (interchain with G-Cter in ubiquitin). The segment covering T429–I455 has biased composition (polar residues). At S436 the chain carries Phosphoserine. A compositionally biased stretch (low complexity) spans S456–S471. Basic residues predominate over residues S698–K722.

It belongs to the ataxin-2 family. Interacts (via C-terminus) with MKT1 (via C-terminus). Interacts with FIR1, IGO1, LSM12, PBP4 and PAB1.

Its subcellular location is the cytoplasm. It is found in the nucleus. It localises to the mitochondrion. Functionally, involved in pre-mRNA polyadenylation. May act to repress the ability of PAB1 to negatively regulate polyadenylation. Negative regulator of poly(A) nuclease (PAN) activity. Promotes mating-type switching in mother cells by positively regulating HO mRNA translation. Localizes MKT1 to polysomes. This is PAB1-binding protein 1 (PBP1) from Saccharomyces cerevisiae (strain ATCC 204508 / S288c) (Baker's yeast).